The sequence spans 353 residues: MSKSRELIIAPKGSQAQLSKLLPQLEDEGIKMIYLDPKKLGKKKTKLQTVYPSNNANYVVLEKENATKPKGKKVGRKFEVLSNTDIENILTIAKKGLDFVVVEVKDWKIIPLENIIAKLHKIHTKIFAVARTPEEVRKMFSILEVGVDGVIFNTSSINEVREAMVYLGTRSFDMKPAKIIDIKEVGDGERVCVDTASMLHKGEGMLIGSRSNFLFLVHNESVGSSFTSPRPFRVNAGAVHCYTLSPDGTTNYLSEVETGSEVLILNSKGKARRATVGRSKIERRPMLMIKAKAGGEIGGIIAQDAETIRFVKPNGQLVSVTHLKKGDTVMVHSKPATGRHFGMEVSDEYILEK.

The protein belongs to the archaeal-type DHQ synthase family.

It catalyses the reaction 2-amino-2,3,7-trideoxy-D-lyxo-hept-6-ulosonate + NAD(+) + H2O = 3-dehydroquinate + NH4(+) + NADH + H(+). Functionally, catalyzes the oxidative deamination and cyclization of 2-amino-3,7-dideoxy-D-threo-hept-6-ulosonic acid (ADH) to yield 3-dehydroquinate (DHQ), which is fed into the canonical shikimic pathway of aromatic amino acid biosynthesis. The sequence is that of 3-dehydroquinate synthase from Nitrosopumilus maritimus (strain SCM1).